Here is a 277-residue protein sequence, read N- to C-terminus: Release factor glutamine methyltransferase (277 aa).

Residues 117–121, D140, W168, and N182 contribute to the S-adenosyl-L-methionine site; that span reads GTGCG. 182 to 185 is a substrate binding site; the sequence is NPPY.

The protein belongs to the protein N5-glutamine methyltransferase family. PrmC subfamily.

The catalysed reaction is L-glutaminyl-[peptide chain release factor] + S-adenosyl-L-methionine = N(5)-methyl-L-glutaminyl-[peptide chain release factor] + S-adenosyl-L-homocysteine + H(+). Its function is as follows. Methylates the class 1 translation termination release factors RF1/PrfA and RF2/PrfB on the glutamine residue of the universally conserved GGQ motif. In Buchnera aphidicola subsp. Acyrthosiphon pisum (strain APS) (Acyrthosiphon pisum symbiotic bacterium), this protein is Release factor glutamine methyltransferase.